We begin with the raw amino-acid sequence, 138 residues long: Small ribosomal subunit protein uS11c (138 aa).

Residues 1 to 23 form a disordered region; sequence MAKAIPRRSSRRNGRIGSRKSAR.

It belongs to the universal ribosomal protein uS11 family. As to quaternary structure, part of the 30S ribosomal subunit.

The protein localises to the plastid. The protein resides in the chloroplast. The polypeptide is Small ribosomal subunit protein uS11c (Ipomoea purpurea (Common morning glory)).